Reading from the N-terminus, the 535-residue chain is Glutamate--cysteine ligase (535 aa).

It belongs to the glutamate--cysteine ligase type 1 family. Type 1 subfamily.

The catalysed reaction is L-cysteine + L-glutamate + ATP = gamma-L-glutamyl-L-cysteine + ADP + phosphate + H(+). The protein operates within sulfur metabolism; glutathione biosynthesis; glutathione from L-cysteine and L-glutamate: step 1/2. This chain is Glutamate--cysteine ligase, found in Pseudomonas syringae pv. syringae.